We begin with the raw amino-acid sequence, 245 residues long: Small ribosomal subunit protein uS3 (245 aa).

In terms of domain architecture, KH type-2 spans 39–111 (IRNFINKNYS…EVFFNVIEIK (73 aa)).

This sequence belongs to the universal ribosomal protein uS3 family. In terms of assembly, part of the 30S ribosomal subunit. Forms a tight complex with proteins S10 and S14.

Functionally, binds the lower part of the 30S subunit head. Binds mRNA in the 70S ribosome, positioning it for translation. The protein is Small ribosomal subunit protein uS3 of Phytoplasma mali (strain AT).